Consider the following 864-residue polypeptide: Leucine--tRNA ligase (864 aa).

Positions Pro-42–His-52 match the 'HIGH' region motif. The 'KMSKS' region signature appears at Lys-624–Ser-628. An ATP-binding site is contributed by Lys-627.

It belongs to the class-I aminoacyl-tRNA synthetase family.

It is found in the cytoplasm. The enzyme catalyses tRNA(Leu) + L-leucine + ATP = L-leucyl-tRNA(Leu) + AMP + diphosphate. The polypeptide is Leucine--tRNA ligase (Burkholderia mallei (strain NCTC 10229)).